Reading from the N-terminus, the 382-residue chain is Cytoplasmic tRNA 2-thiolation protein 2 (382 aa).

This sequence belongs to the CTU2/NCS2 family.

The protein localises to the cytoplasm. The protein operates within tRNA modification; 5-methoxycarbonylmethyl-2-thiouridine-tRNA biosynthesis. In terms of biological role, plays a central role in 2-thiolation of mcm(5)S(2)U at tRNA wobble positions of tRNA(Lys), tRNA(Glu) and tRNA(Gln). May act by forming a heterodimer with NCS6 that ligates sulfur from thiocarboxylated URM1 onto the uridine of tRNAs at wobble position. Prior mcm(5) tRNA modification by the elongator complex is required for 2-thiolation. May also be involved in protein urmylation. This Phaeosphaeria nodorum (strain SN15 / ATCC MYA-4574 / FGSC 10173) (Glume blotch fungus) protein is Cytoplasmic tRNA 2-thiolation protein 2.